Consider the following 249-residue polypeptide: 2,3-bisphosphoglycerate-dependent phosphoglycerate mutase (249 aa).

Residues 8-15 (RHGQSVWN), 21-22 (TG), arginine 60, 87-90 (ERHY), lysine 98, 114-115 (RR), and 183-184 (GN) each bind substrate. Catalysis depends on histidine 9, which acts as the Tele-phosphohistidine intermediate. The Proton donor/acceptor role is filled by glutamate 87.

Belongs to the phosphoglycerate mutase family. BPG-dependent PGAM subfamily. As to quaternary structure, homodimer.

It catalyses the reaction (2R)-2-phosphoglycerate = (2R)-3-phosphoglycerate. It participates in carbohydrate degradation; glycolysis; pyruvate from D-glyceraldehyde 3-phosphate: step 3/5. Its function is as follows. Catalyzes the interconversion of 2-phosphoglycerate and 3-phosphoglycerate. The polypeptide is 2,3-bisphosphoglycerate-dependent phosphoglycerate mutase (Solidesulfovibrio magneticus (strain ATCC 700980 / DSM 13731 / RS-1) (Desulfovibrio magneticus)).